The chain runs to 159 residues: Nucleotide-binding protein Psyr_4087 (159 aa).

The protein belongs to the YajQ family.

Nucleotide-binding protein. This Pseudomonas syringae pv. syringae (strain B728a) protein is Nucleotide-binding protein Psyr_4087.